The primary structure comprises 329 residues: MSAYIIETLIKILILVAVFSALGGFATYIERKVLAYFQRRLGPCYVGPFGLLQVAADGIKLFTKEDIIPQGANKFIFTLAPIIAMVSAFVSMAPIPFFPNFTLFGYEIKPLISDINIGFLFFLAVGAAGIYAPILAGLASNNKYSLIGSARATIQLLSFEVVSTLTILAPLMVVGSLSLVEINHYQSGGFLDWLVFKQPLAFVLFLIASYAELNRTPFDLLEHEAEIVAGYCTEYSGLKWGMFFLAEYAHLFAFSFVISIVFFGGFNAWGFIPGGIAILIKAGFFVFLSMWVRATYPHVRPDQLMDMCWKIMLPLALLNIVLTGIIILI.

A run of 9 helical transmembrane segments spans residues 9–29, 42–62, 75–95, 117–137, 154–174, 188–208, 238–258, 269–291, and 309–329; these read LIKILILVAVFSALGGFATYI, GPCYVGPFGLLQVAADGIKLF, FIFTLAPIIAMVSAFVSMAPI, IGFLFFLAVGAAGIYAPILAG, IQLLSFEVVSTLTILAPLMVV, GGFLDWLVFKQPLAFVLFLIA, LKWGMFFLAEYAHLFAFSFVI, WGFIPGGIAILIKAGFFVFLSMW, and WKIMLPLALLNIVLTGIIILI.

The protein belongs to the complex I subunit 1 family. As to quaternary structure, NDH-1 is composed of 14 different subunits. Subunits NuoA, H, J, K, L, M, N constitute the membrane sector of the complex.

The protein localises to the cell inner membrane. It carries out the reaction a quinone + NADH + 5 H(+)(in) = a quinol + NAD(+) + 4 H(+)(out). Functionally, NDH-1 shuttles electrons from NADH, via FMN and iron-sulfur (Fe-S) centers, to quinones in the respiratory chain. The immediate electron acceptor for the enzyme in this species is believed to be ubiquinone. Couples the redox reaction to proton translocation (for every two electrons transferred, four hydrogen ions are translocated across the cytoplasmic membrane), and thus conserves the redox energy in a proton gradient. This subunit may bind ubiquinone. The sequence is that of NADH-quinone oxidoreductase subunit H from Helicobacter pylori (strain P12).